The primary structure comprises 285 residues: MAPPSRRECPSPSWRFPGLLLAALVLLRSSCSDACGPPPTFEAMELTSRPKPYYKVGERVEYDCKKGYHHFAPFLTHSICDRNHTWLPISDEPCVRKVCHYIPNPLHGEAILANGSYSFGNQLHFICNDGYYLIGKEILYCELKGSDAVWSGRPPICQKILCKPPPKINNGKHTFSDVDVFEYLDAVTYSCDPAPGPDPFSLIGESTIYCRDNSVWSGDAPECKVVKCRFPVIENGKQIAGFGKKFYYKATVIFECDEGFHIIGSDTIVCNSNSTWDPPVPKCVK.

The signal sequence occupies residues 1–32 (MAPPSRRECPSPSWRFPGLLLAALVLLRSSCS). Sushi domains lie at 33 to 96 (DACG…PCVR), 97 to 159 (KVCH…ICQK), 160 to 225 (ILCK…ECKV), and 226 to 285 (VKCR…KCVK). 8 disulfides stabilise this stretch: Cys35–Cys80, Cys64–Cys94, Cys99–Cys141, Cys127–Cys157, Cys162–Cys210, Cys191–Cys223, Cys228–Cys270, and Cys256–Cys283. Residues Thr40 and Thr47 are each glycosylated (O-linked (GalNAc...) threonine). A glycan (N-linked (GlcNAc...) asparagine) is linked at Asn114.

In terms of assembly, interacts with C3b. Interacts with C4b. Interacts with moesin/MSN.

Its subcellular location is the cytoplasmic vesicle. It is found in the secretory vesicle. The protein localises to the acrosome inner membrane. Functionally, acts as a cofactor for complement factor I, a serine protease which protects autologous cells against complement-mediated injury by cleaving C3b and C4b deposited on host tissue. May be involved in the fusion of the spermatozoa with the oocyte during fertilization. Also acts as a costimulatory factor for T-cells which induces the differentiation of CD4+ into T-regulatory 1 cells. T-regulatory 1 cells suppress immune responses by secreting interleukin-10, and therefore are thought to prevent autoimmunity. This chain is Membrane cofactor protein (CD46), found in Saguinus mystax (Moustached tamarin).